The primary structure comprises 95 residues: Large ribosomal subunit protein bL21 (95 aa).

It belongs to the bacterial ribosomal protein bL21 family. Part of the 50S ribosomal subunit. Contacts protein L20.

Functionally, this protein binds to 23S rRNA in the presence of protein L20. The polypeptide is Large ribosomal subunit protein bL21 (Rubrobacter xylanophilus (strain DSM 9941 / JCM 11954 / NBRC 16129 / PRD-1)).